Reading from the N-terminus, the 381-residue chain is Pulmonary surfactant-associated protein B (381 aa).

A signal peptide spans 1-24 (MAESHLLQWLLLLLPTLCGPGTAA). The region spanning 25–65 (WTTSSLACAQGPEFWCQSLEQALQCRALGHCLQEVWGHVGA) is the Saposin A-type domain. A propeptide spanning residues 25–200 (WTTSSLACAQ…PHTQDLSEQQ (176 aa)) is cleaved from the precursor. 3 consecutive Saposin B-type domains span residues 65-147 (ADDL…KSRQ), 204-281 (PLPY…SMDD), and 295-370 (RDSE…GTMS). 9 cysteine pairs are disulfide-bonded: Cys-69-Cys-143, Cys-72-Cys-137, Cys-100-Cys-112, Cys-208-Cys-277, Cys-211-Cys-271, Cys-235-Cys-246, Cys-299-Cys-366, Cys-302-Cys-360, and Cys-325-Cys-335. N-linked (GlcNAc...) asparagine glycosylation is present at Asn-129. Residues 280–381 (DDSAGPRSPT…PLQCIHSPDL (102 aa)) constitute a propeptide that is removed on maturation. Asn-311 carries an N-linked (GlcNAc...) asparagine glycan.

Homodimer; disulfide-linked.

The protein localises to the secreted. Its subcellular location is the extracellular space. It localises to the surface film. Its function is as follows. Pulmonary surfactant-associated proteins promote alveolar stability by lowering the surface tension at the air-liquid interface in the peripheral air spaces. SP-B increases the collapse pressure of palmitic acid to nearly 70 millinewtons per meter. This chain is Pulmonary surfactant-associated protein B (SFTPB), found in Homo sapiens (Human).